The chain runs to 855 residues: Discoidin domain-containing receptor 2 (855 aa).

The N-terminal stretch at 1–21 is a signal peptide; sequence MILIPRMLLVLFLLLPILSSA. Residues 22-399 lie on the Extracellular side of the membrane; sequence KAQVNPAICR…MLKVDDSNTR (378 aa). The 156-residue stretch at 30-185 folds into the F5/8 type C domain; it reads CRYPLGMSGG…VCMRVELYGC (156 aa). Intrachain disulfides connect Cys30/Cys185 and Cys73/Cys177. N-linked (GlcNAc...) asparagine glycosylation is found at Asn121, Asn213, Asn261, Asn280, and Asn372. The helical transmembrane segment at 400 to 421 threads the bilayer; sequence ILIGCLVAIIFILLAIIVIILW. The Cytoplasmic segment spans residues 422–855; the sequence is RQFWQKMLEK…HLLLLQQGDE (434 aa). Residues 452-471 form a disordered region; sequence SMFNNNRSSSPSEQGSNSTY. Tyr471 carries the post-translational modification Phosphotyrosine; by SRC and autocatalysis. In terms of domain architecture, Protein kinase spans 563–849; that stretch reads LTFKEKLGEG…PSFQEIHLLL (287 aa). Residues 569–577 and Lys608 each bind ATP; that span reads LGEGQFGEV. The Proton acceptor role is filled by Asp710. Residues Tyr736, Tyr740, and Tyr741 each carry the phosphotyrosine; by SRC and autocatalysis modification.

It belongs to the protein kinase superfamily. Tyr protein kinase family. Insulin receptor subfamily. In terms of assembly, binds hydroxyproline-rich sequence motifs in fibrillar, glycosylated collagen, such as the GQOGVMGFO motif, where O stands for hydroxyproline. Interacts with SRC. Interacts (tyrosine phosphorylated) with SHC1. In terms of processing, N-glycosylated. Tyrosine phosphorylated in response to collagen binding. Phosphorylated by SRC; this is required for activation and subsequent autophosphorylation on additional tyrosine residues. As to expression, detected in osteocytes, osteoblastic cells in subchondral bone, bone lining cells, tibia and cartilage (at protein level). Detected at high levels in heart and lung, and at low levels in brain, placenta, liver, skeletal muscle, pancreas, and kidney.

It is found in the cell membrane. It carries out the reaction L-tyrosyl-[protein] + ATP = O-phospho-L-tyrosyl-[protein] + ADP + H(+). Present in an inactive state in the absence of collagen binding and phosphorylation by SRC. Tyrosine phosphorylation enhances the affinity for ATP and the catalytic activity. Its function is as follows. Tyrosine kinase involved in the regulation of tissues remodeling. It functions as a cell surface receptor for fibrillar collagen and regulates cell differentiation, remodeling of the extracellular matrix, cell migration and cell proliferation. Required for normal bone development. Regulates osteoblast differentiation and chondrocyte maturation via a signaling pathway that involves MAP kinases and leads to the activation of the transcription factor RUNX2. Regulates remodeling of the extracellular matrix by up-regulation of the collagenases MMP1, MMP2 and MMP13, and thereby facilitates cell migration and tumor cell invasion. Promotes fibroblast migration and proliferation, and thereby contributes to cutaneous wound healing. The chain is Discoidin domain-containing receptor 2 (DDR2) from Homo sapiens (Human).